Here is a 508-residue protein sequence, read N- to C-terminus: tRNA-2-methylthio-N(6)-dimethylallyladenosine synthase (508 aa).

An MTTase N-terminal domain is found at lysine 13 to valine 131. Cysteine 22, cysteine 60, cysteine 94, cysteine 168, cysteine 172, and cysteine 175 together coordinate [4Fe-4S] cluster. One can recognise a Radical SAM core domain in the interval arginine 154–glutamate 385. Residues lysine 387–valine 455 enclose the TRAM domain.

Belongs to the methylthiotransferase family. MiaB subfamily. Monomer. The cofactor is [4Fe-4S] cluster.

The protein resides in the cytoplasm. The catalysed reaction is N(6)-dimethylallyladenosine(37) in tRNA + (sulfur carrier)-SH + AH2 + 2 S-adenosyl-L-methionine = 2-methylsulfanyl-N(6)-dimethylallyladenosine(37) in tRNA + (sulfur carrier)-H + 5'-deoxyadenosine + L-methionine + A + S-adenosyl-L-homocysteine + 2 H(+). Its function is as follows. Catalyzes the methylthiolation of N6-(dimethylallyl)adenosine (i(6)A), leading to the formation of 2-methylthio-N6-(dimethylallyl)adenosine (ms(2)i(6)A) at position 37 in tRNAs that read codons beginning with uridine. The polypeptide is tRNA-2-methylthio-N(6)-dimethylallyladenosine synthase (Streptomyces avermitilis (strain ATCC 31267 / DSM 46492 / JCM 5070 / NBRC 14893 / NCIMB 12804 / NRRL 8165 / MA-4680)).